The primary structure comprises 758 residues: 5-methyltetrahydropteroyltriglutamate--homocysteine methyltransferase (758 aa).

Residues 16–19 (RELK) and Lys-116 each bind 5-methyltetrahydropteroyltri-L-glutamate. Residues 436–438 (IGS) and Glu-489 each bind L-homocysteine. Residues 436-438 (IGS) and Glu-489 each bind L-methionine. 5-methyltetrahydropteroyltri-L-glutamate-binding positions include 520 to 521 (RC) and Trp-566. L-homocysteine is bound at residue Asp-604. Asp-604 contributes to the L-methionine binding site. Glu-610 serves as a coordination point for 5-methyltetrahydropteroyltri-L-glutamate. Zn(2+) is bound by residues His-646, Cys-648, and Glu-670. His-699 functions as the Proton donor in the catalytic mechanism. Cys-731 contacts Zn(2+).

It belongs to the vitamin-B12 independent methionine synthase family. It depends on Zn(2+) as a cofactor.

The enzyme catalyses 5-methyltetrahydropteroyltri-L-glutamate + L-homocysteine = tetrahydropteroyltri-L-glutamate + L-methionine. It participates in amino-acid biosynthesis; L-methionine biosynthesis via de novo pathway; L-methionine from L-homocysteine (MetE route): step 1/1. Functionally, catalyzes the transfer of a methyl group from 5-methyltetrahydrofolate to homocysteine resulting in methionine formation. The chain is 5-methyltetrahydropteroyltriglutamate--homocysteine methyltransferase from Xylella fastidiosa (strain M12).